The primary structure comprises 194 residues: Crossover junction endodeoxyribonuclease RuvC (194 aa).

Residues Asp7, Glu68, and Asp141 contribute to the active site. Mg(2+)-binding residues include Asp7, Glu68, and Asp141.

This sequence belongs to the RuvC family. Homodimer which binds Holliday junction (HJ) DNA. The HJ becomes 2-fold symmetrical on binding to RuvC with unstacked arms; it has a different conformation from HJ DNA in complex with RuvA. In the full resolvosome a probable DNA-RuvA(4)-RuvB(12)-RuvC(2) complex forms which resolves the HJ. It depends on Mg(2+) as a cofactor.

The protein resides in the cytoplasm. The catalysed reaction is Endonucleolytic cleavage at a junction such as a reciprocal single-stranded crossover between two homologous DNA duplexes (Holliday junction).. In terms of biological role, the RuvA-RuvB-RuvC complex processes Holliday junction (HJ) DNA during genetic recombination and DNA repair. Endonuclease that resolves HJ intermediates. Cleaves cruciform DNA by making single-stranded nicks across the HJ at symmetrical positions within the homologous arms, yielding a 5'-phosphate and a 3'-hydroxyl group; requires a central core of homology in the junction. The consensus cleavage sequence is 5'-(A/T)TT(C/G)-3'. Cleavage occurs on the 3'-side of the TT dinucleotide at the point of strand exchange. HJ branch migration catalyzed by RuvA-RuvB allows RuvC to scan DNA until it finds its consensus sequence, where it cleaves and resolves the cruciform DNA. This chain is Crossover junction endodeoxyribonuclease RuvC, found in Bifidobacterium longum (strain DJO10A).